Here is a 515-residue protein sequence, read N- to C-terminus: Maturase K (515 aa).

This sequence belongs to the intron maturase 2 family. MatK subfamily.

It localises to the plastid. The protein resides in the chloroplast. Usually encoded in the trnK tRNA gene intron. Probably assists in splicing its own and other chloroplast group II introns. The polypeptide is Maturase K (Pinus leiophylla (Chihuahua pine)).